The primary structure comprises 424 residues: Phosphomethylpyrimidine synthase (424 aa).

Residues Asn-66, Met-95, Tyr-124, His-163, 185-187, 226-229, and Glu-265 contribute to the substrate site; these read SRG and DGMR. Residue His-269 participates in Zn(2+) binding. Residue Phe-292 participates in substrate binding. Residue His-333 participates in Zn(2+) binding. [4Fe-4S] cluster-binding residues include Cys-408, Cys-411, and Cys-415.

It belongs to the ThiC family. It depends on [4Fe-4S] cluster as a cofactor.

The enzyme catalyses 5-amino-1-(5-phospho-beta-D-ribosyl)imidazole + S-adenosyl-L-methionine = 4-amino-2-methyl-5-(phosphooxymethyl)pyrimidine + CO + 5'-deoxyadenosine + formate + L-methionine + 3 H(+). The protein operates within cofactor biosynthesis; thiamine diphosphate biosynthesis. Its function is as follows. Catalyzes the synthesis of the hydroxymethylpyrimidine phosphate (HMP-P) moiety of thiamine from aminoimidazole ribotide (AIR) in a radical S-adenosyl-L-methionine (SAM)-dependent reaction. This is Phosphomethylpyrimidine synthase from Thermotoga sp. (strain RQ2).